A 151-amino-acid chain; its full sequence is Ribosome maturation factor RimP (151 aa).

Belongs to the RimP family.

It is found in the cytoplasm. In terms of biological role, required for maturation of 30S ribosomal subunits. In Shewanella halifaxensis (strain HAW-EB4), this protein is Ribosome maturation factor RimP.